A 166-amino-acid chain; its full sequence is NADPH-dependent 7-cyano-7-deazaguanine reductase (166 aa).

C57 acts as the Thioimide intermediate in catalysis. The active-site Proton donor is the D64. Substrate is bound by residues 79 to 81 (VES) and 98 to 99 (HE).

The protein belongs to the GTP cyclohydrolase I family. QueF type 1 subfamily.

The protein resides in the cytoplasm. It catalyses the reaction 7-aminomethyl-7-carbaguanine + 2 NADP(+) = 7-cyano-7-deazaguanine + 2 NADPH + 3 H(+). The protein operates within tRNA modification; tRNA-queuosine biosynthesis. Catalyzes the NADPH-dependent reduction of 7-cyano-7-deazaguanine (preQ0) to 7-aminomethyl-7-deazaguanine (preQ1). This chain is NADPH-dependent 7-cyano-7-deazaguanine reductase, found in Staphylococcus epidermidis (strain ATCC 35984 / DSM 28319 / BCRC 17069 / CCUG 31568 / BM 3577 / RP62A).